A 354-amino-acid polypeptide reads, in one-letter code: (R,R)-butanediol dehydrogenase (354 aa).

The Enoyl reductase (ER) domain maps to 10–350 (GDIRIEDIPE…NNESAVKIIV (341 aa)). Positions 37, 71, and 157 each coordinate Zn(2+).

Belongs to the zinc-containing alcohol dehydrogenase family. It depends on Zn(2+) as a cofactor.

The enzyme catalyses (R,R)-butane-2,3-diol + NAD(+) = (R)-acetoin + NADH + H(+). It carries out the reaction (S)-acetoin + NAD(+) = diacetyl + NADH + H(+). In terms of biological role, NAD-dependent butanediol dehydrogenase which catalyzes the oxidation of (R,R)-butane-2,3-diol to (3R)-acetoin and of meso-butane-2,3-diol to (3S)-acetoin. Preferentially oxidizes (R,R)-butane-2,3-diol, with a catalytic efficiency approximately fourfold higher than with meso-butane-2,3-diol. Shows a very low activity with (S,S)-butane-2,3-diol. Can also catalyze the reduction of (3R/3S)-acetoin and diacetyl in the presence of NADH. The sequence is that of (R,R)-butanediol dehydrogenase from Neisseria gonorrhoeae (strain ATCC 700825 / FA 1090).